Here is a 158-residue protein sequence, read N- to C-terminus: uncharacterized protein (158 aa).

The region spanning 12 to 73 (LDEIDRAILR…LINPFKAGYE (62 aa)) is the HTH asnC-type domain. Positions 31-50 (YSEISRRINVPESTVRARVN) form a DNA-binding region, H-T-H motif.

This is an uncharacterized protein from Pyrococcus abyssi (strain GE5 / Orsay).